The primary structure comprises 1085 residues: Solute carrier family 12 member 4 (1085 aa).

Residues 1–119 lie on the Cytoplasmic side of the membrane; that stretch reads MPHFTVVPVD…RRAAEAPSMG (119 aa). 5 positions are modified to phosphoserine: serine 24, serine 47, serine 51, serine 81, and serine 88. A discontinuously helical membrane pass occupies residues 120–141; that stretch reads TLMGVYLPCLQNIFGVILFLRL. K(+)-binding residues include asparagine 131 and isoleucine 132. Residues 142-149 are Extracellular-facing; that stretch reads TWMVGTAG. A helical membrane pass occupies residues 150 to 172; the sequence is VLQALLIVLICCCCTLLTAISMS. Residues 173-196 lie on the Cytoplasmic side of the membrane; that stretch reads AIATNGVVPAGGSYFMISRSLGPE. Residues 197-225 form a helical membrane-spanning segment; the sequence is FGGAVGLCFYLGTTFAAAMYILGAIEILL. Tyrosine 216 contributes to the K(+) binding site. The Extracellular portion of the chain corresponds to 226 to 248; that stretch reads TYIAPPAAIFYPSGAHDTSNATL. An N-linked (GlcNAc...) asparagine glycan is attached at asparagine 245. A run of 2 helical transmembrane segments spans residues 249-271 and 272-297; these read NNMR…VGVK and YVNK…GGIK. The Extracellular segment spans residues 298–419; sequence SIFDPPVFPV…LYVVADIATS (122 aa). Cysteine 308 and cysteine 323 form a disulfide bridge. 4 N-linked (GlcNAc...) asparagine glycosylation sites follow: asparagine 312, asparagine 331, asparagine 347, and asparagine 361. Cysteine 343 and cysteine 353 are joined by a disulfide. The helical transmembrane segment at 420-440 threads the bilayer; the sequence is FTVLVGIFFPSVTGIMAGSNR. Residues proline 429 and threonine 432 each contribute to the K(+) site. 3 residues coordinate chloride: glycine 433, isoleucine 434, and methionine 435. Residues 441 to 450 lie on the Cytoplasmic side of the membrane; sequence SGDLRDAQKS. A helical transmembrane segment spans residues 451 to 473; it reads IPVGTILAIITTSLVYFSSVVLF. The Extracellular portion of the chain corresponds to 474–504; sequence GACIEGVVLRDKYGDGVSRNLVVGTLAWPSP. The chain crosses the membrane as a helical span at residues 505-531; that stretch reads WVIVIGSFFSTCGAGLQSLTGAPRLLQ. The Cytoplasmic segment spans residues 532–554; the sequence is AIAKDNIIPFLRVFGHGKVNGEP. The next 2 membrane-spanning stretches (helical) occupy residues 555-575 and 576-598; these read TWAL…ASLD and MVAP…ACAV. Tyrosine 589 contributes to the chloride binding site. Residues 599-612 lie on the Cytoplasmic side of the membrane; that stretch reads QTLLRTPNWRPRFK. 2 helical membrane passes run 613–635 and 636–651; these read YYHW…VSSW and YYAL…IYKY. The Cytoplasmic portion of the chain corresponds to 652-1085; it reads IEYQGAEKEW…GGREVITIYS (434 aa). The scissor helix stretch occupies residues 665 to 681; sequence IRGLSLSAARYALLRLE. ATP contacts are provided by leucine 697, lysine 699, lysine 707, tyrosine 708, and valine 730. Serine 734 carries the phosphoserine modification. Positions 794, 795, and 797 each coordinate ATP. Phosphoserine is present on residues serine 916 and serine 967. Threonine 983 is subject to Phosphothreonine. Serine 1050 bears the Phosphoserine mark.

The protein belongs to the SLC12A transporter family. K/Cl co-transporter subfamily. Homodimer; adopts a domain-swap conformation at the scissor helices connecting the transmembrane domain and C-terminal domain. Heterodimer with other K-Cl cotransporters. Phosphorylated, phosphorylation may regulate transporter activity. In terms of tissue distribution, ubiquitous. Levels are much higher in erythrocytes from patients with Hb SC and Hb SS compared to normal AA erythrocytes. This may contribute to red blood cell dehydration and to the manifestation of sickle cell disease by increasing the intracellular concentration of HbS. As to expression, not detected in circulating reticulocytes.

Its subcellular location is the cell membrane. It catalyses the reaction K(+)(in) + chloride(in) = K(+)(out) + chloride(out). Inhibited by WNK3. Its function is as follows. Mediates electroneutral potassium-chloride cotransport when activated by cell swelling. May contribute to cell volume homeostasis in single cells. May be involved in the regulation of basolateral Cl(-) exit in NaCl absorbing epithelia. In terms of biological role, no transporter activity. The protein is Solute carrier family 12 member 4 of Homo sapiens (Human).